A 141-amino-acid chain; its full sequence is 3-hydroxyacyl-[acyl-carrier-protein] dehydratase FabZ (141 aa).

Residue H48 is part of the active site.

It belongs to the thioester dehydratase family. FabZ subfamily.

The protein resides in the cytoplasm. The catalysed reaction is a (3R)-hydroxyacyl-[ACP] = a (2E)-enoyl-[ACP] + H2O. Functionally, involved in unsaturated fatty acids biosynthesis. Catalyzes the dehydration of short chain beta-hydroxyacyl-ACPs and long chain saturated and unsaturated beta-hydroxyacyl-ACPs. This is 3-hydroxyacyl-[acyl-carrier-protein] dehydratase FabZ from Bacillus velezensis (strain DSM 23117 / BGSC 10A6 / LMG 26770 / FZB42) (Bacillus amyloliquefaciens subsp. plantarum).